The sequence spans 153 residues: Pheromone-binding protein Gp-9 (153 aa).

Positions methionine 1–alanine 19 are cleaved as a signal peptide. Intrachain disulfides connect cysteine 37–cysteine 77, cysteine 73–cysteine 129, and cysteine 118–cysteine 138.

Belongs to the PBP/GOBP family. Homodimer.

Its subcellular location is the secreted. Its function is as follows. Colony queen number, a major feature of social organization, is associated with worker genotype for Gp-9. Colonies are headed by either a single reproductive queen (monogyne form) or multiple queens (polygyne form). Differences in worker Gp-9 genotypes between social forms may cause differences in workers' abilities to recognize queens and regulate their numbers. The sequence is that of Pheromone-binding protein Gp-9 from Solenopsis electra (Fire ant).